Consider the following 68-residue polypeptide: Large ribosomal subunit protein bL32 (68 aa).

Belongs to the bacterial ribosomal protein bL32 family.

The sequence is that of Large ribosomal subunit protein bL32 from Ruegeria pomeroyi (strain ATCC 700808 / DSM 15171 / DSS-3) (Silicibacter pomeroyi).